Consider the following 269-residue polypeptide: Putative hydro-lyase M446_2125 (269 aa).

The protein belongs to the D-glutamate cyclase family.

The polypeptide is Putative hydro-lyase M446_2125 (Methylobacterium sp. (strain 4-46)).